A 363-amino-acid chain; its full sequence is NAD(P)H-quinone oxidoreductase subunit 1, chloroplastic (363 aa).

Helical transmembrane passes span 28-48, 98-118, 129-149, 253-273, 300-320, and 336-356; these read WVFVPILIFIVGITISVLAIV, FSFGPAISVISIILSYSVIPF, IGVFLWIAISSIAPIGLLMSG, FGLFYVASYLNLLVSSLFVTV, VFVTIIGIFITLVKTFLFIFV, and LLNLGWKFLLPISLGNLLLTT.

This sequence belongs to the complex I subunit 1 family. In terms of assembly, NDH is composed of at least 16 different subunits, 5 of which are encoded in the nucleus.

The protein resides in the plastid. Its subcellular location is the chloroplast thylakoid membrane. It catalyses the reaction a plastoquinone + NADH + (n+1) H(+)(in) = a plastoquinol + NAD(+) + n H(+)(out). The enzyme catalyses a plastoquinone + NADPH + (n+1) H(+)(in) = a plastoquinol + NADP(+) + n H(+)(out). In terms of biological role, NDH shuttles electrons from NAD(P)H:plastoquinone, via FMN and iron-sulfur (Fe-S) centers, to quinones in the photosynthetic chain and possibly in a chloroplast respiratory chain. The immediate electron acceptor for the enzyme in this species is believed to be plastoquinone. Couples the redox reaction to proton translocation, and thus conserves the redox energy in a proton gradient. The chain is NAD(P)H-quinone oxidoreductase subunit 1, chloroplastic from Phaseolus vulgaris (Kidney bean).